The following is a 1203-amino-acid chain: DNA-directed RNA polymerase subunit beta' (1203 aa).

Cys-60, Cys-62, Cys-75, and Cys-78 together coordinate Zn(2+). The Mg(2+) site is built by Asp-449, Asp-451, and Asp-453. 4 residues coordinate Zn(2+): Cys-818, Cys-892, Cys-899, and Cys-902. Positions 1180 to 1203 (RNLESGLDMPESAEESSEEETQTV) are disordered. The span at 1190–1203 (ESAEESSEEETQTV) shows a compositional bias: acidic residues.

It belongs to the RNA polymerase beta' chain family. As to quaternary structure, the RNAP catalytic core consists of 2 alpha, 1 beta, 1 beta' and 1 omega subunit. When a sigma factor is associated with the core the holoenzyme is formed, which can initiate transcription. Mg(2+) serves as cofactor. Requires Zn(2+) as cofactor.

It carries out the reaction RNA(n) + a ribonucleoside 5'-triphosphate = RNA(n+1) + diphosphate. Functionally, DNA-dependent RNA polymerase catalyzes the transcription of DNA into RNA using the four ribonucleoside triphosphates as substrates. The sequence is that of DNA-directed RNA polymerase subunit beta' from Oceanobacillus iheyensis (strain DSM 14371 / CIP 107618 / JCM 11309 / KCTC 3954 / HTE831).